Reading from the N-terminus, the 594-residue chain is Adenine deaminase 1 (594 aa).

It belongs to the metallo-dependent hydrolases superfamily. Adenine deaminase family. Mn(2+) serves as cofactor.

It carries out the reaction adenine + H2O + H(+) = hypoxanthine + NH4(+). This is Adenine deaminase 1 from Latilactobacillus sakei subsp. sakei (strain 23K) (Lactobacillus sakei subsp. sakei).